The chain runs to 449 residues: 1H-pyrrole-2-carbonyl-[peptidyl-carrier protein] chlorinase (449 aa).

Residues Ala16, Glu35, Arg41, His43, Val44, Ser47, Arg123, Ile147, and Asp316 each coordinate FAD. Residues Ser327 and Gly328 each coordinate chloride. Position 329 (Val329) interacts with FAD.

It belongs to the flavin-dependent halogenase family. Homodimer.

The enzyme catalyses (1H-pyrrole-2-carbonyl)-[peptidyl-carrier protein] + 2 FADH2 + 2 chloride + 2 O2 = (4,5-dichloro-1H-pyrrole-2-carbonyl)-[peptidyl-carrier protein] + 2 FAD + 4 H2O. It carries out the reaction (1H-pyrrole-2-carbonyl)-[peptidyl-carrier protein] + FADH2 + chloride + O2 = (5-chloro-1H-pyrrole-2-carbonyl)-[peptidyl-carrier protein] + FAD + 2 H2O. It catalyses the reaction (5-chloro-1H-pyrrole-2-carbonyl)-[peptidyl-carrier protein] + FADH2 + chloride + O2 = (4,5-dichloro-1H-pyrrole-2-carbonyl)-[peptidyl-carrier protein] + FAD + 2 H2O. Its pathway is antibiotic biosynthesis. Its function is as follows. Involved in the biosynthesis of the antibiotic pyoluteorin. Catalyzes the dichlorination of the pyrrole ring of pyrrolyl-S-PltL, generating the 5-chloropyrrolyl-S-PltL intermediate and then the 4,5-dichloropyrrolyl-S-PltL product. The protein is 1H-pyrrole-2-carbonyl-[peptidyl-carrier protein] chlorinase of Pseudomonas fluorescens (strain ATCC BAA-477 / NRRL B-23932 / Pf-5).